The primary structure comprises 275 residues: Interleukin-2 receptor subunit alpha (275 aa).

Positions 1–21 (MEPSLLMWRFFVFIVVPGCVT) are cleaved as a signal peptide. 2 consecutive Sushi domains span residues 22–81 (EACH…FCNS) and 121–186 (GHCE…KCIS). Residues 22 to 243 (EACHDDPPSL…DTFIFTTEYQ (222 aa)) lie on the Extracellular side of the membrane. 3 disulfide bridges follow: cysteine 24-cysteine 64, cysteine 49-cysteine 77, and cysteine 51-cysteine 79. An N-linked (GlcNAc...) asparagine glycan is attached at asparagine 80. Residues 86 to 130 (KNPVKPVTPGSEEQRERKPTDAQSQTQPPEQADLPGHCEEPPPWE) are disordered. Residues 121–130 (GHCEEPPPWE) show a composition bias toward basic and acidic residues. Disulfide bonds link cysteine 123–cysteine 168 and cysteine 152–cysteine 184. The segment at 188–213 (GANSQAPDEAEPPESTEAPPGSGTFL) is disordered. Residues 244-262 (IAVAGCILLLSSILLLSCL) traverse the membrane as a helical segment. Over 263–275 (TWQRRWKKNRRTI) the chain is Cytoplasmic.

In terms of assembly, non-covalent dimer of an alpha and a beta subunit. IL2R exists in 3 different forms: a high affinity dimer, an intermediate affinity monomer (beta subunit), and a low affinity monomer (alpha subunit). The high and intermediate affinity forms also associate with a gamma subunit.

It is found in the membrane. Receptor for interleukin-2. The receptor is involved in the regulation of immune tolerance by controlling regulatory T cells (TREGs) activity. TREGs suppress the activation and expansion of autoreactive T-cells. The sequence is that of Interleukin-2 receptor subunit alpha (IL2RA) from Ovis aries (Sheep).